Consider the following 130-residue polypeptide: Small ribosomal subunit protein uS8 (130 aa).

Belongs to the universal ribosomal protein uS8 family. In terms of assembly, part of the 30S ribosomal subunit. Contacts proteins S5 and S12.

Functionally, one of the primary rRNA binding proteins, it binds directly to 16S rRNA central domain where it helps coordinate assembly of the platform of the 30S subunit. In Phytoplasma australiense, this protein is Small ribosomal subunit protein uS8.